Reading from the N-terminus, the 253-residue chain is Testis-expressed protein 47 (253 aa).

This is Testis-expressed protein 47 from Rattus norvegicus (Rat).